The chain runs to 855 residues: E3 ubiquitin-protein ligase TRIM71 (855 aa).

Residue A2 is modified to N-acetylalanine. The RING-type zinc finger occupies 12–94 (CLLCKEMCGS…ALKLRCPVCD (83 aa)). Low complexity predominate over residues 26–42 (SSSSSASSSSSQTSTSS). Disordered regions lie at residues 26–48 (SSSS…GGGP) and 126–177 (ADEP…SPGS). Residues 135–145 (RAGGGPGGAGG) show a composition bias toward gly residues. Positions 147–157 (SNHRHHAHHPA) are enriched in basic residues. A B box-type 1; atypical zinc finger spans residues 181-228 (RRPHGCSSCDEGNAASSRCLDCQEHLCDNCVRAHQRVRLTKDHYIERG). A B box-type 2 zinc finger spans residues 260–301 (ERLGFCQHHDDEVLHLYCDTCSVPICRECTLGRHGGHSFAYL). Residues C265, H268, C288, and H293 each coordinate Zn(2+). A coiled-coil region spans residues 378–414 (QVKAKSLYLQVEKLRQNLNKLESTISAVQQVLEEGRA). One copy of the Filamin repeat lies at 466 to 567 (SSGAFAPLTK…IENSPFKVVV (102 aa)). NHL repeat units follow at residues 580–623 (VLSF…FKPC), 627–670 (HHKF…FTFE), 674–717 (LLKF…FGPD), 721–764 (LNKY…IHPD), 768–811 (ARFL…FEAN), and 815–855 (LCKF…ILIF).

The protein belongs to the TRIM/RBCC family. As to quaternary structure, interacts (via NHL repeats) with AGO2; the interaction increases in presence of RNA. Interacts with HSP90AA1. Interacts (via NHL repeats) with MOV10, PABPC1, PUM1, PUM2, STAU2, XRN1 and XRN2 in an RNA-dependent manner. Interacts with SHCBP1; leading to enhance its stability. Autoubiquitinated.

It localises to the cytoplasm. It is found in the P-body. The catalysed reaction is S-ubiquitinyl-[E2 ubiquitin-conjugating enzyme]-L-cysteine + [acceptor protein]-L-lysine = [E2 ubiquitin-conjugating enzyme]-L-cysteine + N(6)-ubiquitinyl-[acceptor protein]-L-lysine.. The protein operates within protein modification; protein ubiquitination. E3 ubiquitin-protein ligase that cooperates with the microRNAs (miRNAs) machinery and promotes embryonic stem cells proliferation and maintenance. Binds to miRNAs and associates with AGO2, participating in post-transcriptional repression of transcripts such as CDKN1A. In addition, participates in post-transcriptional mRNA repression in a miRNA independent mechanism. Facilitates the G1-S transition to promote rapid embryonic stem cell self-renewal by repressing CDKN1A expression. Required to maintain proliferation and prevent premature differentiation of neural progenitor cells during early neural development: positively regulates FGF signaling by controlling the stability of SHCBP1. Specific regulator of miRNA biogenesis. Binds to miRNA MIR29A hairpin and postranscriptionally modulates MIR29A levels, which indirectly regulates TET proteins expression. This Rattus norvegicus (Rat) protein is E3 ubiquitin-protein ligase TRIM71 (Trim71).